Reading from the N-terminus, the 61-residue chain is Large ribosomal subunit protein uL29 (61 aa).

This sequence belongs to the universal ribosomal protein uL29 family.

This chain is Large ribosomal subunit protein uL29, found in Campylobacter lari (strain RM2100 / D67 / ATCC BAA-1060).